A 348-amino-acid polypeptide reads, in one-letter code: WD repeat-containing protein JIP5 (348 aa).

WD repeat units lie at residues 5–44, 51–90, 94–132, 135–174, 179–218, 223–261, and 264–304; these read KLKNQPFDVAFHPKEPVVFSSLLTGQVCAWSYDDATGETS, PSKRTARALSIEENGDEIWMGGKSGSLFQLSTRDGSMTRE, AHECPINRVYCVNRNLVATGDDDGVIKLWDPRQADSIRT, QHFDYISDFTYFDDKRQLVATSGDGHLSVIDIRSNKSTPL, DQEDELLSIVPIKGGQKAIVGSGLGILSVWNRQMGWADSV, GHPASIDAIVALTPDIIATGSEDGMIRVIQVLPHKFLGV, and THEE…EDSD. Residues 299-318 show a composition bias toward acidic residues; that stretch reads LFEDSDEDDEMEEDEPDSDE. Residues 299–348 are disordered; it reads LFEDSDEDDEMEEDEPDSDEEKSKKKKKDNGMKDMSRGQAENDGSFFADL.

This sequence belongs to the WD repeat WDR55 family.

The protein localises to the nucleus. It localises to the nucleolus. The chain is WD repeat-containing protein JIP5 (JIP5) from Cryptococcus neoformans var. neoformans serotype D (strain JEC21 / ATCC MYA-565) (Filobasidiella neoformans).